Reading from the N-terminus, the 135-residue chain is Dihydromethanopterin reductase (135 aa).

NADP(+) contacts are provided by residues A9, 16–21 (LGLNGH), 52–54 (PKT), and 93–97 (GGIAV).

As to quaternary structure, homodimer.

It catalyses the reaction 5,6,7,8-tetrahydromethanopterin + NAD(+) = 7,8-dihydromethanopterin + NADH + H(+). It carries out the reaction 5,6,7,8-tetrahydromethanopterin + NADP(+) = 7,8-dihydromethanopterin + NADPH + H(+). It functions in the pathway cofactor biosynthesis; 5,6,7,8-tetrahydromethanopterin biosynthesis. Functionally, catalyzes the reduction of dihydromethanopterin (H(2)MPT) to tetrahydromethanopterin (H(4)MPT). Shows preference for NADPH rather than NADH as electron donor. Does not reduce dihydrofolate. This chain is Dihydromethanopterin reductase (dmrA), found in Methylorubrum extorquens (strain ATCC 14718 / DSM 1338 / JCM 2805 / NCIMB 9133 / AM1) (Methylobacterium extorquens).